Consider the following 204-residue polypeptide: Urease accessory protein UreG 1 (204 aa).

Residue 14-21 coordinates GTP; sequence GPVGSGKT.

The protein belongs to the SIMIBI class G3E GTPase family. UreG subfamily. Homodimer. UreD, UreF and UreG form a complex that acts as a GTP-hydrolysis-dependent molecular chaperone, activating the urease apoprotein by helping to assemble the nickel containing metallocenter of UreC. The UreE protein probably delivers the nickel.

The protein resides in the cytoplasm. Functionally, facilitates the functional incorporation of the urease nickel metallocenter. This process requires GTP hydrolysis, probably effectuated by UreG. The sequence is that of Urease accessory protein UreG 1 from Methylorubrum extorquens (strain PA1) (Methylobacterium extorquens).